Reading from the N-terminus, the 51-residue chain is Large ribosomal subunit protein eL39 (51 aa).

The interval 1–22 (MPSQKSFRTKQKLAKAQKQNRP) is disordered.

This sequence belongs to the eukaryotic ribosomal protein eL39 family. Interacts with YIH1.

The polypeptide is Large ribosomal subunit protein eL39 (RPL39) (Debaryomyces hansenii (strain ATCC 36239 / CBS 767 / BCRC 21394 / JCM 1990 / NBRC 0083 / IGC 2968) (Yeast)).